The sequence spans 149 residues: Transcription factor bHLH153 (149 aa).

The bHLH domain maps to 27–76 (RHKSDLSFSSKERKDKVGERISALQQIVSPYGKTDTASVLLDAMHYIEFL).

Belongs to the bHLH protein family.

The protein resides in the nucleus. In Arabidopsis thaliana (Mouse-ear cress), this protein is Transcription factor bHLH153.